We begin with the raw amino-acid sequence, 451 residues long: MLNLEKIEKLLEVGDYADIRINFGESNTITLKDGKIEEISSGFGNGVAVRVLYKNGWGFVTSNIVSEEEIEKLINKAYKMAKISNEYSEKEIILKDYKAIIDNYKMIGKINPTDVDIEEKKEIIIDTYKNMTDEKIKSISVSYSDVFGKRIFMISEGSRIEGEITRCIMYMNCVAKENGNLQYGAERTGGFGFEKIKDNYLNLALEAKNRALRLLKAKPCPKGKFKVILDPELAGVFIHEAVGHASEADLVLQNDSVFKDKLGERVGSEYVTVIDDATIEGAFGSYKYDDEGVEGKKTVIIENGILKTYLHSRETAGRMDAELTGNGRAEGLNKPIVRMSNTFIKPGDWSFEELLEDTKEGIFLKGSRGGQVDTGKGLFQFSAVEAYLIENGELTQVLKDAGLSGEILDILFKVDAVTKDFELSVGYCGKDGQSVPVGDGGGCVRTIATVS.

This sequence belongs to the peptidase U62 family.

In terms of biological role, probable metalloprotease. The sequence is that of Metalloprotease MJ0996 from Methanocaldococcus jannaschii (strain ATCC 43067 / DSM 2661 / JAL-1 / JCM 10045 / NBRC 100440) (Methanococcus jannaschii).